The following is a 259-amino-acid chain: Type III pantothenate kinase (259 aa).

6-13 lines the ATP pocket; the sequence is DVGNTNCT. Position 107 to 110 (107 to 110) interacts with substrate; sequence GSDR. The Proton acceptor role is filled by Asp109. Asp129 contributes to the K(+) binding site. Thr132 is an ATP binding site. A substrate-binding site is contributed by Thr184.

Belongs to the type III pantothenate kinase family. Homodimer. NH4(+) serves as cofactor. It depends on K(+) as a cofactor.

The protein resides in the cytoplasm. The catalysed reaction is (R)-pantothenate + ATP = (R)-4'-phosphopantothenate + ADP + H(+). It participates in cofactor biosynthesis; coenzyme A biosynthesis; CoA from (R)-pantothenate: step 1/5. Catalyzes the phosphorylation of pantothenate (Pan), the first step in CoA biosynthesis. This is Type III pantothenate kinase from Listeria monocytogenes serotype 4b (strain CLIP80459).